A 393-amino-acid polypeptide reads, in one-letter code: Epoxyqueuosine reductase (393 aa).

The active-site Proton donor is the Asp154. In terms of domain architecture, 4Fe-4S ferredoxin-type spans 196–228 (LPLPVDIPVQEGCHSCVACITSCPTGAIVEPYT). Residues Cys208, Cys211, Cys214, Cys218, Cys234, Cys261, Cys264, and Cys268 each coordinate [4Fe-4S] cluster.

Belongs to the QueG family. In terms of assembly, monomer. Requires cob(II)alamin as cofactor. The cofactor is [4Fe-4S] cluster.

It localises to the cytoplasm. The catalysed reaction is epoxyqueuosine(34) in tRNA + AH2 = queuosine(34) in tRNA + A + H2O. It functions in the pathway tRNA modification; tRNA-queuosine biosynthesis. In terms of biological role, catalyzes the conversion of epoxyqueuosine (oQ) to queuosine (Q), which is a hypermodified base found in the wobble positions of tRNA(Asp), tRNA(Asn), tRNA(His) and tRNA(Tyr). This Shewanella oneidensis (strain ATCC 700550 / JCM 31522 / CIP 106686 / LMG 19005 / NCIMB 14063 / MR-1) protein is Epoxyqueuosine reductase.